The sequence spans 230 residues: Orotidine 5'-phosphate decarboxylase (230 aa).

Substrate contacts are provided by residues Asp10, Lys32, 59 to 68 (DLKYHDIPNT), Thr119, Arg180, Gln189, Gly209, and Arg210. Lys61 functions as the Proton donor in the catalytic mechanism.

It belongs to the OMP decarboxylase family. Type 1 subfamily. Homodimer.

It carries out the reaction orotidine 5'-phosphate + H(+) = UMP + CO2. Its pathway is pyrimidine metabolism; UMP biosynthesis via de novo pathway; UMP from orotate: step 2/2. Catalyzes the decarboxylation of orotidine 5'-monophosphate (OMP) to uridine 5'-monophosphate (UMP). This is Orotidine 5'-phosphate decarboxylase from Haemophilus ducreyi (strain 35000HP / ATCC 700724).